The sequence spans 467 residues: Spermatogenesis- and oogenesis-specific basic helix-loop-helix-containing protein 2 (467 aa).

One can recognise a bHLH domain in the interval 200–251; it reads QASFLHSTKEKLRRERIKSCCEQLRTLLPYVKGRKSDVASVIEATVDYVKQV. Positions 443–453 are enriched in low complexity; the sequence is ASASDHQASQP. A disordered region spans residues 443 to 467; the sequence is ASASDHQASQPPALPSPQPHDSSYF.

As to quaternary structure, forms both hetero- and homodimers with SOHLH1. As to expression, preferentially expressed in the adult ovary and testis. Expressed in the majority of spermatogonia in adult animals, but not in the most undifferentiated spermatogonial population.

Its subcellular location is the nucleus. It is found in the cytoplasm. Its function is as follows. Transcription regulator of both male and female germline differentiation. Suppresses genes involved in spermatogonial stem cells maintenance, and induces genes important for spermatogonial differentiation. Coordinates oocyte differentiation without affecting meiosis I. This chain is Spermatogenesis- and oogenesis-specific basic helix-loop-helix-containing protein 2 (Sohlh2), found in Mus musculus (Mouse).